A 197-amino-acid chain; its full sequence is Protein RESISTANCE TO PHYTOPHTHORA 1, chloroplastic (197 aa).

The N-terminal 52 residues, 1 to 52, are a transit peptide targeting the chloroplast; it reads MSWSLCSTHGVSSSIALTYGFRHRRRSTFRIFATSDGLEPKDDPPESPLPSS. Positions 35–56 are disordered; the sequence is SDGLEPKDDPPESPLPSSSSAL. A run of 4 helical transmembrane segments spans residues 93–113, 120–140, 150–170, and 173–193; these read FEVQ…NLLF, LWRL…LRAR, LNYL…FWKS, and LVWS…LGWL.

The protein resides in the plastid. It is found in the chloroplast. Its subcellular location is the membrane. In terms of biological role, plays a positive role in the immune response to the oomycetes P.brassicae, including induced oxidative burst (e.g. H(2)O(2)) and enhanced expression of defense-related genes. This Arabidopsis thaliana (Mouse-ear cress) protein is Protein RESISTANCE TO PHYTOPHTHORA 1, chloroplastic.